Consider the following 133-residue polypeptide: Interleukin-4 (133 aa).

The first 24 residues, 1 to 24 (MGLTSQLIPMLVCLLACTSNFVHG), serve as a signal peptide directing secretion. 3 disulfide bridges follow: cysteine 27–cysteine 133, cysteine 48–cysteine 85, and cysteine 70–cysteine 105. N-linked (GlcNAc...) asparagine glycosylation is found at asparagine 62, asparagine 96, and asparagine 102.

It belongs to the IL-4/IL-13 family.

It is found in the secreted. In terms of biological role, participates in at least several B-cell activation processes as well as of other cell types. It is a costimulator of DNA-synthesis. It induces the expression of class II MHC molecules on resting B-cells. It enhances both secretion and cell surface expression of IgE and IgG1. It also regulates the expression of the low affinity Fc receptor for IgE (CD23) on both lymphocytes and monocytes. Positively regulates IL31RA expression in macrophages. Stimulates autophagy in dendritic cells by interfering with mTORC1 signaling and through the induction of RUFY4. In Tursiops truncatus (Atlantic bottle-nosed dolphin), this protein is Interleukin-4 (IL4).